Consider the following 150-residue polypeptide: D-aminoacyl-tRNA deacylase (150 aa).

Positions 138 to 139 (GP) match the Gly-cisPro motif, important for rejection of L-amino acids motif.

The protein belongs to the DTD family. Homodimer.

It is found in the cytoplasm. The enzyme catalyses glycyl-tRNA(Ala) + H2O = tRNA(Ala) + glycine + H(+). It carries out the reaction a D-aminoacyl-tRNA + H2O = a tRNA + a D-alpha-amino acid + H(+). Its function is as follows. An aminoacyl-tRNA editing enzyme that deacylates mischarged D-aminoacyl-tRNAs. Also deacylates mischarged glycyl-tRNA(Ala), protecting cells against glycine mischarging by AlaRS. Acts via tRNA-based rather than protein-based catalysis; rejects L-amino acids rather than detecting D-amino acids in the active site. By recycling D-aminoacyl-tRNA to D-amino acids and free tRNA molecules, this enzyme counteracts the toxicity associated with the formation of D-aminoacyl-tRNA entities in vivo and helps enforce protein L-homochirality. This chain is D-aminoacyl-tRNA deacylase, found in Flavobacterium johnsoniae (strain ATCC 17061 / DSM 2064 / JCM 8514 / BCRC 14874 / CCUG 350202 / NBRC 14942 / NCIMB 11054 / UW101) (Cytophaga johnsonae).